The primary structure comprises 627 residues: 1-deoxy-D-xylulose-5-phosphate synthase (627 aa).

Thiamine diphosphate-binding positions include H74 and 115-117 (GHA). D146 provides a ligand contact to Mg(2+). Thiamine diphosphate is bound by residues 147–148 (AA), N175, F284, and E364. Residue N175 participates in Mg(2+) binding.

Belongs to the transketolase family. DXPS subfamily. In terms of assembly, homodimer. Mg(2+) is required as a cofactor. It depends on thiamine diphosphate as a cofactor.

The catalysed reaction is D-glyceraldehyde 3-phosphate + pyruvate + H(+) = 1-deoxy-D-xylulose 5-phosphate + CO2. The protein operates within metabolic intermediate biosynthesis; 1-deoxy-D-xylulose 5-phosphate biosynthesis; 1-deoxy-D-xylulose 5-phosphate from D-glyceraldehyde 3-phosphate and pyruvate: step 1/1. Its function is as follows. Catalyzes the acyloin condensation reaction between C atoms 2 and 3 of pyruvate and glyceraldehyde 3-phosphate to yield 1-deoxy-D-xylulose-5-phosphate (DXP). This is 1-deoxy-D-xylulose-5-phosphate synthase from Acidobacterium capsulatum (strain ATCC 51196 / DSM 11244 / BCRC 80197 / JCM 7670 / NBRC 15755 / NCIMB 13165 / 161).